The primary structure comprises 100 residues: Putative pterin-4-alpha-carbinolamine dehydratase (100 aa).

Belongs to the pterin-4-alpha-carbinolamine dehydratase family.

It catalyses the reaction (4aS,6R)-4a-hydroxy-L-erythro-5,6,7,8-tetrahydrobiopterin = (6R)-L-erythro-6,7-dihydrobiopterin + H2O. The protein is Putative pterin-4-alpha-carbinolamine dehydratase of Bradyrhizobium diazoefficiens (strain JCM 10833 / BCRC 13528 / IAM 13628 / NBRC 14792 / USDA 110).